Reading from the N-terminus, the 310-residue chain is Olfactory receptor 2A1/2A42 (310 aa).

Over 1 to 24 (MGENQTMVTEFLLLGFLLGPRIQM) the chain is Extracellular. N4 carries N-linked (GlcNAc...) asparagine glycosylation. Residues 25-48 (LLFGLFSLFYIFTLLGNGAILGLI) form a helical membrane-spanning segment. Residues 49 to 56 (SLDSRLHT) are Cytoplasmic-facing. The chain crosses the membrane as a helical span at residues 57-78 (PMYFFLSHLAVVDIAYTRNTVP). Residues 79–99 (QMLANLLHPAKPISFAGCMTQ) lie on the Extracellular side of the membrane. C96 and C188 are oxidised to a cystine. The helical transmembrane segment at 100–119 (TFLCLSFGHSECLLLVLMSY) threads the bilayer. At 120-138 (DRYVAICHPLRYSVIMTWR) the chain is on the cytoplasmic side. A helical transmembrane segment spans residues 139–157 (VCITLAVTSWTCGSLLALA). The Extracellular portion of the chain corresponds to 158 to 195 (HVVLILRLPFSGPHEINHFFCEILSVLRLACADTWLNQ). A helical membrane pass occupies residues 196 to 218 (VVIFAACVFFLVGPPSLVLVSYS). Residues 219–235 (HILAAILRIQSGEGRRK) are Cytoplasmic-facing. A helical membrane pass occupies residues 236 to 258 (AFSTCSSHLCVVGLFFGSAIIMY). The Extracellular portion of the chain corresponds to 259 to 271 (MAPKSRHPEEQQK). A helical transmembrane segment spans residues 272 to 291 (VFFLFYSFFNPTLNPLIYSL). Residues 292–310 (RNGEVKGALRRALGKESHS) lie on the Cytoplasmic side of the membrane.

Belongs to the G-protein coupled receptor 1 family.

It localises to the cell membrane. Functionally, odorant receptor. The protein is Olfactory receptor 2A1/2A42 (OR2A1) of Homo sapiens (Human).